A 195-amino-acid chain; its full sequence is Imidazoleglycerol-phosphate dehydratase (195 aa).

Belongs to the imidazoleglycerol-phosphate dehydratase family.

Its subcellular location is the cytoplasm. The enzyme catalyses D-erythro-1-(imidazol-4-yl)glycerol 3-phosphate = 3-(imidazol-4-yl)-2-oxopropyl phosphate + H2O. It functions in the pathway amino-acid biosynthesis; L-histidine biosynthesis; L-histidine from 5-phospho-alpha-D-ribose 1-diphosphate: step 6/9. This chain is Imidazoleglycerol-phosphate dehydratase, found in Methylorubrum populi (strain ATCC BAA-705 / NCIMB 13946 / BJ001) (Methylobacterium populi).